Consider the following 522-residue polypeptide: 2-isopropylmalate synthase (522 aa).

The Pyruvate carboxyltransferase domain occupies 5–267; that stretch reads VIIFDTTLRD…ETGINAKEIH (263 aa). Mn(2+)-binding residues include aspartate 14, histidine 202, histidine 204, and asparagine 238. Positions 392 to 522 are regulatory domain; it reads QLQQLVVQSD…MQKNRELGGV (131 aa).

It belongs to the alpha-IPM synthase/homocitrate synthase family. LeuA type 1 subfamily. Homodimer. It depends on Mn(2+) as a cofactor.

The protein localises to the cytoplasm. The enzyme catalyses 3-methyl-2-oxobutanoate + acetyl-CoA + H2O = (2S)-2-isopropylmalate + CoA + H(+). Its pathway is amino-acid biosynthesis; L-leucine biosynthesis; L-leucine from 3-methyl-2-oxobutanoate: step 1/4. Functionally, catalyzes the condensation of the acetyl group of acetyl-CoA with 3-methyl-2-oxobutanoate (2-ketoisovalerate) to form 3-carboxy-3-hydroxy-4-methylpentanoate (2-isopropylmalate). The protein is 2-isopropylmalate synthase of Shewanella baltica (strain OS185).